Reading from the N-terminus, the 204-residue chain is Urease accessory protein UreG (204 aa).

11–18 (GPVGAGKT) is a binding site for GTP.

Belongs to the SIMIBI class G3E GTPase family. UreG subfamily. As to quaternary structure, homodimer. UreD, UreF and UreG form a complex that acts as a GTP-hydrolysis-dependent molecular chaperone, activating the urease apoprotein by helping to assemble the nickel containing metallocenter of UreC. The UreE protein probably delivers the nickel.

It localises to the cytoplasm. In terms of biological role, facilitates the functional incorporation of the urease nickel metallocenter. This process requires GTP hydrolysis, probably effectuated by UreG. In Staphylococcus aureus (strain bovine RF122 / ET3-1), this protein is Urease accessory protein UreG.